Here is a 623-residue protein sequence, read N- to C-terminus: Lamin-B2.L (623 aa).

The span at 1–18 (MATTTPSRSTRSSMQSPA) shows a compositional bias: low complexity. The segment at 1 to 30 (MATTTPSRSTRSSMQSPARGTSTPLSPTRI) is disordered. The interval 2-27 (ATTTPSRSTRSSMQSPARGTSTPLSP) is head. The segment covering 19 to 30 (RGTSTPLSPTRI) has biased composition (polar residues). Residue serine 26 is modified to Phosphoserine. Residues 28-64 (TRISRLQEKEELRHLNDRLAVYIDRVRALELENDRLM) form a coil 1A region. The region spanning 35–391 (EKEELRHLND…KLLEGEEERL (357 aa)) is the IF rod domain. Positions 64 to 74 (MVKISEKEEVT) are linker 1. Residues 75 to 211 (TREVSGIKNL…QSLQEEMDFR (137 aa)) form a coil 1B region. The segment at 212–235 (KNIYEEESRETRKRHERRIVEVDR) is linker 2. Positions 236–378 (GHHYDYESKL…VKLALDLEIN (143 aa)) are coil 2. The tail stretch occupies residues 380-592 (YRKLLEGEEE…VTKSVLRNVE (213 aa)). Disordered regions lie at residues 388 to 473 (EERL…LSQQ) and 591 to 623 (VEEE…CSVM). Phosphoserine is present on serine 396. Over residues 398–416 (ESRVTVSRATSSSSSATRT) the composition is skewed to low complexity. A Nuclear localization signal motif is present at residues 420–425 (KRRRVE). Residues 443–473 (LGSSRITASEGSSRTITSGQSSTTRFHLSQQ) show a composition bias toward polar residues. Residues 468-585 (FHLSQQASAT…EEVAVRTVTK (118 aa)) enclose the LTD domain. Positions 592–604 (EEEEDEDADFGEE) are enriched in acidic residues. Residues 612 to 623 (DPRTTSRGCSVM) are compositionally biased toward polar residues. Cysteine 620 carries the cysteine methyl ester modification. Residue cysteine 620 is the site of S-farnesyl cysteine attachment. Residues 621-623 (SVM) constitute a propeptide, removed in mature form.

Belongs to the intermediate filament family. In terms of processing, phosphorylation plays a key role in lamin organization, subcellular localization and nuclear envelope disintegration. Phosphorylation by CDK1 at Ser-26 at the onset of mitosis drives lamin disassembly and nuclear envelope breakdown.

The protein localises to the nucleus lamina. It localises to the nucleus envelope. The protein resides in the nucleus. It is found in the nucleoplasm. Its subcellular location is the nucleus matrix. Its function is as follows. Lamins are intermediate filament proteins that assemble into a filamentous meshwork, and which constitute the major components of the nuclear lamina, a fibrous layer on the nucleoplasmic side of the inner nuclear membrane. Lamins provide a framework for the nuclear envelope, bridging the nuclear envelope and chromatin, thereby playing an important role in nuclear assembly, chromatin organization, nuclear membrane and telomere dynamics. The structural integrity of the lamina is strictly controlled by the cell cycle, as seen by the disintegration and formation of the nuclear envelope in prophase and telophase, respectively. In Xenopus laevis (African clawed frog), this protein is Lamin-B2.L (lmnb2.L).